A 1429-amino-acid polypeptide reads, in one-letter code: Alpha-agarase (1429 aa).

The signal sequence occupies residues Met-1–Ala-26. 2 consecutive CBM6 domains span residues Leu-29 to Thr-161 and Phe-211 to Thr-345. Disordered stretches follow at residues Ser-349–Ser-400 and Asn-474–Gly-495. The span at Ser-369–Thr-378 shows a compositional bias: polar residues. One can recognise a PA14 domain in the interval Asn-490–Asn-638. The CBM6 3 domain maps to Ile-662–Ala-793.

It belongs to the glycosyl hydrolase 96 family. Homodimer. It depends on Ca(2+) as a cofactor.

The catalysed reaction is Endohydrolysis of 1,3-alpha-L-galactosidic linkages in agarose, yielding agarotetraose as the major product.. In terms of biological role, alpha-agarase. Does not hydrolyze agarotetraose, agarohexaose, kappa-carrageenan, iota-carrageenan or lambda-carrageenan. This chain is Alpha-agarase, found in Alteromonas agarilytica.